Reading from the N-terminus, the 325-residue chain is MAEYKDNLLGEANSFLEVLEQVSHLAPLDKPVLIIGERGTGKELIASRLHYLSSRWQGPFISLNCAALNENLLDSELFGHEAGAFTGAQKRHPGRFERADGGTLFLDELATAPMMVQEKLLRVIEYGELERVGGSQPLQVNVRLVCATNADLPAMVNEGTFRADLLDRLAFDVVQLPPLRERESDIMLMAEYFAIQMCREIKLPLFPGFTERARETLLNYRWPGNIRELKNVVERSVYRHGTSDYPLDDIIIDPFKRRPPEDAIAVSETTSLPTLPLDLREFQMQQEKELLQLSLQQGKYNQKRAAELLGLTYHQFRALLKKHQI.

The Sigma-54 factor interaction domain maps to 15–237 (FLEVLEQVSH…ELKNVVERSV (223 aa)). Residues 36–43 (GERGTGKE) and 99–108 (ADGGTLFLDE) each bind ATP. Residues 302-321 (QKRAAELLGLTYHQFRALLK) constitute a DNA-binding region (H-T-H motif).

Forms a complex with PspA, which is composed of around 6 PspF subunits and 6 PspA subunits.

It localises to the cytoplasm. With respect to regulation, ATPase activity is inhibited by interaction with PspA. Under inducing conditions, the interaction is disrupted, allowing activation of psp transcription. Functionally, transcriptional activator for the phage shock protein (psp) operon (pspABCDE) and pspG gene. The sequence is that of Psp operon transcriptional activator (pspF) from Escherichia coli (strain K12).